The following is a 45-amino-acid chain: Scolopendra 20417.15 Da toxin (45 aa).

Positions 26–45 (KVANGQEAGQPGAXNMKELH) are disordered.

It belongs to the CRISP family. Venom allergen 5-like subfamily. Contains 3 disulfide bonds. Expressed by the venom gland.

The protein localises to the secreted. This chain is Scolopendra 20417.15 Da toxin, found in Scolopendra viridicornis nigra (Brazilian giant centipede).